Reading from the N-terminus, the 829-residue chain is Periplasmic nitrate reductase (829 aa).

The tat-type signal signal peptide spans 1 to 29 (MKMTRRAFVKANAAASAAAVAGVTLPATA). Residues 41–97 (ITWDKAPCRFCGTGCSVLVGTQNGKVVATQGDPEAPVNKGLNCIKGYFLSKIMYGKD) enclose the 4Fe-4S Mo/W bis-MGD-type domain. [4Fe-4S] cluster is bound by residues C48, C51, C55, and C83. Mo-bis(molybdopterin guanine dinucleotide) is bound by residues K85, Q152, N177, C181, 214-221 (WGSNMAEM), 245-249 (STYYH), 264-266 (QSD), M374, Q378, N484, 510-511 (SD), K533, D560, and 718-727 (TGRVLEHWHT). F794 contributes to the substrate binding site. Positions 802 and 819 each coordinate Mo-bis(molybdopterin guanine dinucleotide).

The protein belongs to the prokaryotic molybdopterin-containing oxidoreductase family. NasA/NapA/NarB subfamily. In terms of assembly, component of the periplasmic nitrate reductase NapAB complex composed of NapA and NapB. It depends on [4Fe-4S] cluster as a cofactor. Mo-bis(molybdopterin guanine dinucleotide) is required as a cofactor. Post-translationally, predicted to be exported by the Tat system. The position of the signal peptide cleavage has not been experimentally proven.

Its subcellular location is the periplasm. It carries out the reaction 2 Fe(II)-[cytochrome] + nitrate + 2 H(+) = 2 Fe(III)-[cytochrome] + nitrite + H2O. Its function is as follows. Catalytic subunit of the periplasmic nitrate reductase complex NapAB. Receives electrons from NapB and catalyzes the reduction of nitrate to nitrite. The polypeptide is Periplasmic nitrate reductase (Vibrio atlanticus (strain LGP32) (Vibrio splendidus (strain Mel32))).